The chain runs to 230 residues: Urease accessory protein UreF (230 aa).

Belongs to the UreF family. As to quaternary structure, ureD, UreF and UreG form a complex that acts as a GTP-hydrolysis-dependent molecular chaperone, activating the urease apoprotein by helping to assemble the nickel containing metallocenter of UreC. The UreE protein probably delivers the nickel.

The protein resides in the cytoplasm. Its function is as follows. Required for maturation of urease via the functional incorporation of the urease nickel metallocenter. This is Urease accessory protein UreF from Cupriavidus pinatubonensis (strain JMP 134 / LMG 1197) (Cupriavidus necator (strain JMP 134)).